Consider the following 1857-residue polypeptide: Peripheral-type benzodiazepine receptor-associated protein 1 (1857 aa).

Disordered stretches follow at residues Met-1 to Asp-103, Gln-284 to Ala-321, and Pro-565 to Ser-629. Over residues Leu-55–Gly-67 the composition is skewed to basic and acidic residues. Over residues Leu-87 to Pro-96 the composition is skewed to polar residues. A compositionally biased stretch (pro residues) spans Pro-289–Pro-298. Composition is skewed to low complexity over residues Ala-299–Thr-316 and Ser-603–Ser-616. In terms of domain architecture, SH3 1 spans Ala-653–Asp-720. The interval Pro-729–Pro-789 is disordered. Low complexity predominate over residues Gly-755–Gln-764. Fibronectin type-III domains are found at residues Val-791–Gly-882, Val-884–Ala-976, and Ala-981–Ala-1081. Disordered regions lie at residues Leu-1083–Glu-1311, Phe-1330–Gly-1479, and Tyr-1501–Arg-1601. Positions Ala-1098–Leu-1116 are enriched in low complexity. The span at Glu-1138–Pro-1147 shows a compositional bias: basic and acidic residues. Polar residues predominate over residues Ala-1201–Met-1218. Residues Asp-1259–Glu-1274 show a composition bias toward acidic residues. The span at Arg-1278–Arg-1292 shows a compositional bias: polar residues. Over residues Pro-1333–Glu-1346 the composition is skewed to acidic residues. Basic and acidic residues-rich tracts occupy residues Arg-1420 to Ser-1429 and Ala-1554 to Gly-1586. The region spanning Leu-1625–Val-1693 is the SH3 2 domain. Disordered regions lie at residues Val-1723–Ala-1761 and Ser-1823–Cys-1857. In terms of domain architecture, SH3 3 spans Lys-1764–Pro-1831.

The protein belongs to the RIMBP family. In terms of assembly, interacts with RIMS1 and RIMS2. Interacts with TSPO. Interacts with CACNA1A. Predominantly expressed in brain, pituitary gland and thymus in adults. In adult brain, highest expression found in temporal lobe and the putamen, followed by amygdala, caudate nucleus, cerebral cortex, occipital and frontal lobe. A high expression level is also observed in fetal tissues like brain, heart, kidney and thymus.

The protein localises to the cytoplasm. It localises to the mitochondrion. Functionally, required for synaptic transmission regulation. It probably controls the recruitement of voltage-gated calcium channels to the presynaptic membrane, and modulates neurotransmitter release. The protein is Peripheral-type benzodiazepine receptor-associated protein 1 of Homo sapiens (Human).